The primary structure comprises 124 residues: S-adenosylmethionine decarboxylase proenzyme (124 aa).

Serine 63 serves as the catalytic Schiff-base intermediate with substrate; via pyruvic acid. Serine 63 bears the Pyruvic acid (Ser); by autocatalysis mark. Histidine 68 acts as the Proton acceptor; for processing activity in catalysis. The Proton donor; for catalytic activity role is filled by cysteine 83.

This sequence belongs to the prokaryotic AdoMetDC family. Type 1 subfamily. In terms of assembly, heterotetramer of two alpha and two beta chains arranged as a dimer of alpha/beta heterodimers. It depends on pyruvate as a cofactor. Post-translationally, is synthesized initially as an inactive proenzyme. Formation of the active enzyme involves a self-maturation process in which the active site pyruvoyl group is generated from an internal serine residue via an autocatalytic post-translational modification. Two non-identical subunits are generated from the proenzyme in this reaction, and the pyruvate is formed at the N-terminus of the alpha chain, which is derived from the carboxyl end of the proenzyme. The post-translation cleavage follows an unusual pathway, termed non-hydrolytic serinolysis, in which the side chain hydroxyl group of the serine supplies its oxygen atom to form the C-terminus of the beta chain, while the remainder of the serine residue undergoes an oxidative deamination to produce ammonia and the pyruvoyl group blocking the N-terminus of the alpha chain.

It catalyses the reaction S-adenosyl-L-methionine + H(+) = S-adenosyl 3-(methylsulfanyl)propylamine + CO2. The protein operates within amine and polyamine biosynthesis; S-adenosylmethioninamine biosynthesis; S-adenosylmethioninamine from S-adenosyl-L-methionine: step 1/1. Its function is as follows. Catalyzes the decarboxylation of S-adenosylmethionine to S-adenosylmethioninamine (dcAdoMet), the propylamine donor required for the synthesis of the polyamines spermine and spermidine from the diamine putrescine. The polypeptide is S-adenosylmethionine decarboxylase proenzyme (Geobacillus sp. (strain WCH70)).